A 187-amino-acid chain; its full sequence is Elongation factor P (187 aa).

This sequence belongs to the elongation factor P family.

Its subcellular location is the cytoplasm. Its pathway is protein biosynthesis; polypeptide chain elongation. Involved in peptide bond synthesis. Stimulates efficient translation and peptide-bond synthesis on native or reconstituted 70S ribosomes in vitro. Probably functions indirectly by altering the affinity of the ribosome for aminoacyl-tRNA, thus increasing their reactivity as acceptors for peptidyl transferase. The protein is Elongation factor P of Leifsonia xyli subsp. xyli (strain CTCB07).